A 634-amino-acid chain; its full sequence is MSGAIFGPLEGPSSLDAPSIHPLVCPLCHVQYERPCLLDCFHDFCAGCLRGRATDGRLTCPLCQHQTVLKGPSGLPPVDRLLQFLVDSSGDGVEAVRCANCDLECSEQDVETTYFCNTCGQPLCARCRDETHRARMFARHDIVALGQRSRDVPQKCTLHAEPYLLFSTDKKLLLCIRCFRDMQKESRAHCVDLESAYVQGCERLEQAVLAVKALQTATREAIALLQAMVEEVRHSAAEEEDAIHALFGSMQDRLAERKALLLQAVQSQYEEKDKAFKEQLSHLATLLPTLQVHLVICSSFLSLANKAEFLDLGYELMERLQGIVTRPHHLRPIQSSKIASDHRAEFARCLEPLLLLGPRRVAAAASGANTLAGGLGPKALTGPHCPSPVGKMSGSPVQKPTLHRSISTKVLLAEGENTPFAEHCRHYEDSYRHLQAEMQSLKDQVQELHRDLTKHHSLIKAEIMGDVLHKSLQLDVQIASEHASLEGMRVVFQEIWEEAYQRVANEQEIYEAQLHDLLQLRQENAYLTTITKQITPYVRSIAKVKERLEPRFQAPVDEQSESLQNTHDDSRNNAASARNNPGSVPEKREKTSEPKGNSWAPNGLSEEPLLKNMDHHRSKQKNGGDVPTWREHPT.

Residues 25–64 (CPLCHVQYERPCLLDCFHDFCAGCLRGRATDGRLTCPLCQ) form an RING-type zinc finger. The B box-type; atypical zinc finger occupies 93–145 (VEAVRCANCDLECSEQDVETTYFCNTCGQPLCARCRDETHRARMFARHDIVAL). Positions 98, 101, 127, and 132 each coordinate Zn(2+). 2 coiled-coil regions span residues 422–457 (EHCR…KHHS) and 494–518 (EIWE…HDLL). Positions 552–634 (FQAPVDEQSE…DVPTWREHPT (83 aa)) are disordered.

Interacts with the core-glycosylated, but not the fully glycosylated form of KCNH2/HERG. Interacts with DNAJA1 and HSPA8. Interacts (via the C-terminus) with HSPA1A; this interaction additively increases KCNH2 expression.

It is found in the cytoplasm. Its function is as follows. Plays a role in cardiac repolarization possibly by stabilizing membrane expression of the potassium channel KCNH2/HERG, or by assisting its synthesis, folding or export from the endoplasmic reticulum, in a heat shock protein-dependent manner. The protein is RING finger protein 207 (RNF207) of Homo sapiens (Human).